A 157-amino-acid chain; its full sequence is Small ribosomal subunit protein uS7 (157 aa).

The protein belongs to the universal ribosomal protein uS7 family. In terms of assembly, part of the 30S ribosomal subunit. Contacts proteins S9 and S11.

Its function is as follows. One of the primary rRNA binding proteins, it binds directly to 16S rRNA where it nucleates assembly of the head domain of the 30S subunit. Is located at the subunit interface close to the decoding center, probably blocks exit of the E-site tRNA. This chain is Small ribosomal subunit protein uS7, found in Chlamydia trachomatis serovar A (strain ATCC VR-571B / DSM 19440 / HAR-13).